Consider the following 108-residue polypeptide: UPF0145 protein alr2488 (108 aa).

Belongs to the UPF0145 family.

This is UPF0145 protein alr2488 from Nostoc sp. (strain PCC 7120 / SAG 25.82 / UTEX 2576).